A 290-amino-acid chain; its full sequence is Cbb3-type cytochrome c oxidase subunit FixP (290 aa).

Over methionine 1–arginine 32 the chain is Cytoplasmic. The chain crosses the membrane as a helical span at residues tryptophan 33–proline 53. Over alanine 54–lysine 290 the chain is Periplasmic. Cytochrome c domains are found at residues leucine 109–serine 198 and tyrosine 206–glycine 287. Heme c-binding residues include cysteine 122, cysteine 125, histidine 126, methionine 173, cysteine 219, cysteine 222, histidine 223, and methionine 264.

The protein belongs to the CcoP / FixP family. As to quaternary structure, component of the cbb3-type cytochrome c oxidase at least composed of FixN, FixO, FixQ and FixP. Requires heme c as cofactor.

The protein resides in the cell inner membrane. It participates in energy metabolism; oxidative phosphorylation. Its function is as follows. C-type cytochrome. Part of the cbb3-type cytochrome c oxidase complex. FixP subunit is required for transferring electrons from donor cytochrome c via its heme groups to FixO subunit. From there, electrons are shuttled to the catalytic binuclear center of FixN subunit where oxygen reduction takes place. The complex also functions as a proton pump. The polypeptide is Cbb3-type cytochrome c oxidase subunit FixP (Bradyrhizobium diazoefficiens (strain JCM 10833 / BCRC 13528 / IAM 13628 / NBRC 14792 / USDA 110)).